The primary structure comprises 1811 residues: Protein virilizer homolog (1811 aa).

Residue A2 is modified to N-acetylalanine. The interval 132–302 is disordered; that stretch reads ISHDRDSPPP…EGDDGYEQIS (171 aa). A phosphoserine mark is found at S133 and S138. A compositionally biased stretch (pro residues) spans 139–152; sequence PPPPPPPPPPPQPQ. Positions 160 to 169 are enriched in basic and acidic residues; sequence KHADGEKEDQ. Residue S173 is modified to Phosphoserine. Pro residues predominate over residues 174 to 190; the sequence is PPRPQPRGPRTPPGPPP. Phosphothreonine is present on T184. The residue at position 222 (S222) is a Phosphoserine. Residues 224–233 are compositionally biased toward polar residues; that stretch reads DRNSVPQEGQ. Composition is skewed to acidic residues over residues 234-267 and 274-302; these read YSDE…DEDD and IPDD…EQIS. At Y913 the chain carries Phosphotyrosine. S1578 bears the Phosphoserine mark. Disordered stretches follow at residues 1615 to 1634 and 1662 to 1811; these read HVVP…GIRP and KEVV…SFTR. The span at 1688 to 1697 shows a compositional bias: gly residues; it reads GFSGNRGGRG. The residue at position 1707 (T1707) is a Phosphothreonine. R1722 carries the post-translational modification Omega-N-methylarginine. The segment covering 1722-1747 has biased composition (polar residues); that stretch reads RGSSWSAQNTPRGNYNESRGGQSNFN. R1740 is subject to Asymmetric dimethylarginine; alternate. R1740 is subject to Omega-N-methylarginine; alternate. Residues R1772, R1774, and R1792 each carry the asymmetric dimethylarginine modification. Residues 1787 to 1801 are compositionally biased toward gly residues; the sequence is GSGGSRGKFVSGGSG. Basic residues predominate over residues 1802 to 1811; the sequence is RGRHVRSFTR.

It belongs to the vir family. Component of the WMM complex, a N6-methyltransferase complex composed of a catalytic subcomplex, named MAC, and of an associated subcomplex, named MACOM. The MAC subcomplex is composed of METTL3 and METTL14. The MACOM subcomplex is composed of WTAP, ZC3H13, CBLL1/HAKAI, VIRMA, and, in some cases of RBM15 (RBM15 or RBM15B). Interacts with WTAP. Also a component of a MACOM-like complex, named WTAP complex, composed of WTAP, ZC3H13, CBLL1, VIRMA, RBM15, BCLAF1 and THRAP3. Interacts with NUDT21 and CPSF6.

It localises to the nucleus speckle. It is found in the nucleus. The protein localises to the nucleoplasm. Its subcellular location is the cytoplasm. In terms of biological role, associated component of the WMM complex, a complex that mediates N6-methyladenosine (m6A) methylation of RNAs, a modification that plays a role in the efficiency of mRNA splicing and RNA processing. Acts as a key regulator of m6A methylation by promoting m6A methylation of mRNAs in the 3'-UTR near the stop codon: recruits the catalytic core components METTL3 and METTL14, thereby guiding m6A methylation at specific sites. Required for mRNA polyadenylation via its role in selective m6A methylation: m6A methylation of mRNAs in the 3'-UTR near the stop codon correlating with alternative polyadenylation (APA). This Mus musculus (Mouse) protein is Protein virilizer homolog.